We begin with the raw amino-acid sequence, 195 residues long: NADH-ubiquinone oxidoreductase subunit 9 (195 aa).

This sequence belongs to the complex I 30 kDa subunit family. Complex I is composed of about 30 different subunits.

It is found in the mitochondrion inner membrane. It carries out the reaction a ubiquinone + NADH + 5 H(+)(in) = a ubiquinol + NAD(+) + 4 H(+)(out). Its function is as follows. Core subunit of the mitochondrial membrane respiratory chain NADH dehydrogenase (Complex I) that is believed to belong to the minimal assembly required for catalysis. Complex I functions in the transfer of electrons from NADH to the respiratory chain. The immediate electron acceptor for the enzyme is believed to be ubiquinone. The chain is NADH-ubiquinone oxidoreductase subunit 9 (NAD9) from Acanthamoeba castellanii (Amoeba).